The chain runs to 1165 residues: Sperm-associated antigen 5 (1165 aa).

Positions 1 to 23 (MWRVKTLNLGLSPSPQKGKPAMS) are disordered. Phosphoserine is present on residues Ser12, Ser14, Ser66, Ser161, Ser321, Ser333, and Ser342. Residues 431–457 (TVPHREARDSSTQTDSSPCGVTKTPKH) form a disordered region. Residues 440–449 (SSTQTDSSPC) show a composition bias toward polar residues. The interaction with KNSTRN stretch occupies residues 453-821 (KTPKHLQDSK…LRDTVDSLRA (369 aa)). Residues 509–856 (RSKTLVSSCS…LLAEQLQSLT (348 aa)) adopt a coiled-coil conformation. Residues 875–907 (PSTGSAPAQEHPLSNDSSISEQTPTAAVDEVPE) form a disordered region. Residues 876-897 (STGSAPAQEHPLSNDSSISEQT) show a composition bias toward polar residues. Positions 937–1146 (DLEKSLAEMS…IQHVYETLLS (210 aa)) form a coiled coil. At Ser946 the chain carries Phosphoserine; by GSK3-beta.

As to quaternary structure, homodimer, with a globular head domain and a long stalk. Homooligomer; the globular head domains associate, resulting in aster-like structures. Binds to microtubules in the mitotic spindle. Interacts with DCLRE1B/Apollo. Part of an astrin (SPAG5)-kinastrin (SKAP) complex containing KNSTRN, SPAG5, PLK1, DYNLL1 and SGO2A. Interacts with KNSTRN. Interacts with RPTOR; this interaction competes with RPTOR binding to MTOR, resulting in decreased mTORC1 formation. Interacts with G3BP1. The complex formed with G3BP1 and RPTOR is increased by oxidative stress. Interacts with OSBPL8, PCM1 and CDK5RAP2. Interacts (via C-terminus) with NUMA1 (via C-terminus); this interaction promotes the recruitment of SPAG5 to the microtubules at spindle poles in a dynein-dynactin-dependent manner. Interacts with DYNLL1. Post-translationally, phosphorylated by AURKA. Detected in testis, but not in the other tissues tested.

The protein localises to the cytoplasm. It is found in the cytoskeleton. The protein resides in the spindle. Its subcellular location is the spindle pole. It localises to the chromosome. The protein localises to the centromere. It is found in the kinetochore. The protein resides in the midbody. Its subcellular location is the microtubule organizing center. It localises to the centrosome. The protein localises to the centriolar satellite. Essential component of the mitotic spindle required for normal chromosome segregation and progression into anaphase. Required for chromosome alignment, normal timing of sister chromatid segregation, and maintenance of spindle pole architecture. In complex with SKAP, promotes stable microtubule-kinetochore attachments. May contribute to the regulation of separase activity. May regulate AURKA localization to mitotic spindle, but not to centrosomes and CCNB1 localization to both mitotic spindle and centrosomes. Involved in centriole duplication. Required for CDK5RAP22, CEP152, WDR62 and CEP63 centrosomal localization and promotes the centrosomal localization of CDK2. In non-mitotic cells, upon stress induction, inhibits mammalian target of rapamycin complex 1 (mTORC1) association and recruits the mTORC1 component RPTOR to stress granules (SGs), thereby preventing mTORC1 hyperactivation-induced apoptosis. May enhance GSK3B-mediated phosphorylation of other substrates, such as MAPT/TAU. This chain is Sperm-associated antigen 5 (Spag5), found in Mus musculus (Mouse).